Here is an 803-residue protein sequence, read N- to C-terminus: Protein AMEIOTIC 1 homolog (803 aa).

Disordered stretches follow at residues 21 to 64 and 264 to 333; these read RPQV…QSLS and RLRQ…RWSA. The segment covering 39 to 50 has biased composition (basic and acidic residues); sequence NGKDDANHDESK. Positions 51-64 are enriched in polar residues; sequence NQSPGLPLSRQSLS. Over residues 283-295 the composition is skewed to basic and acidic residues; it reads KREEAESSMDKSR. Over residues 296–313 the composition is skewed to basic residues; that stretch reads AARKKKAKTYKSPKKVEK. The segment covering 314 to 333 has biased composition (basic and acidic residues); it reads RRVVEAKDGDPRRGKDRWSA. Residues 450–567 adopt a coiled-coil conformation; that stretch reads VKKKVEELAE…SSFLSLKEQL (118 aa). The segment at 651-688 is disordered; sequence ISGGGSSSCPVASGPEQLPRSSSCPSIGPGGLPPSSRA.

The protein resides in the nucleus. Its subcellular location is the chromosome. In terms of biological role, plays a fundamental role in building the proper chromosome structure at the beginning of meiosis in male meiocytes. Required for the transition from leptotene to zygotene in meiocytes. Required for homologous chromosome pairing. This Oryza sativa subsp. japonica (Rice) protein is Protein AMEIOTIC 1 homolog.